The chain runs to 481 residues: Probable myosin light chain kinase DDB_G0284661 (481 aa).

The Protein kinase domain occupies 13–269; the sequence is YNITDIIGEG…VKQSLAHKWI (257 aa). ATP-binding positions include 19–27 and K43; that span reads IGEGTFSTV. The Proton acceptor role is filled by D136. Disordered stretches follow at residues 285–315 and 345–427; these read PLIT…PSLK and SNSH…DDDE. Residues 379-421 are compositionally biased toward low complexity; sequence SNNNINNNNDNNDNNNSNSNNSNNNINNFINNNNNNNNNNSNF.

The protein belongs to the protein kinase superfamily. CAMK Ser/Thr protein kinase family. CaMK subfamily.

It carries out the reaction L-seryl-[myosin light chain] + ATP = O-phospho-L-seryl-[myosin light chain] + ADP + H(+). The catalysed reaction is L-threonyl-[myosin light chain] + ATP = O-phospho-L-threonyl-[myosin light chain] + ADP + H(+). Does not have a calmodulin-binding domain. In terms of biological role, may phosphorylate a specific serine in the N-terminus of a myosin light chain. In Dictyostelium discoideum (Social amoeba), this protein is Probable myosin light chain kinase DDB_G0284661.